The following is a 174-amino-acid chain: ATP-dependent protease subunit HslV (174 aa).

Residue T2 is part of the active site. 3 residues coordinate Na(+): G157, C160, and T163.

The protein belongs to the peptidase T1B family. HslV subfamily. As to quaternary structure, a double ring-shaped homohexamer of HslV is capped on each side by a ring-shaped HslU homohexamer. The assembly of the HslU/HslV complex is dependent on binding of ATP.

The protein resides in the cytoplasm. The enzyme catalyses ATP-dependent cleavage of peptide bonds with broad specificity.. With respect to regulation, allosterically activated by HslU binding. In terms of biological role, protease subunit of a proteasome-like degradation complex believed to be a general protein degrading machinery. This Yersinia enterocolitica serotype O:8 / biotype 1B (strain NCTC 13174 / 8081) protein is ATP-dependent protease subunit HslV.